The primary structure comprises 334 residues: Anthranilate phosphoribosyltransferase (334 aa).

Residues glycine 79, 82-83 (GD), serine 87, 89-92 (NIST), 107-115 (KAGNRSISS), and serine 119 contribute to the 5-phospho-alpha-D-ribose 1-diphosphate site. Glycine 79 contributes to the anthranilate binding site. Serine 91 is a binding site for Mg(2+). Asparagine 110 serves as a coordination point for anthranilate. Arginine 165 is a binding site for anthranilate. Aspartate 224 and glutamate 225 together coordinate Mg(2+).

Belongs to the anthranilate phosphoribosyltransferase family. In terms of assembly, homodimer. The cofactor is Mg(2+).

The catalysed reaction is N-(5-phospho-beta-D-ribosyl)anthranilate + diphosphate = 5-phospho-alpha-D-ribose 1-diphosphate + anthranilate. It functions in the pathway amino-acid biosynthesis; L-tryptophan biosynthesis; L-tryptophan from chorismate: step 2/5. In terms of biological role, catalyzes the transfer of the phosphoribosyl group of 5-phosphorylribose-1-pyrophosphate (PRPP) to anthranilate to yield N-(5'-phosphoribosyl)-anthranilate (PRA). This is Anthranilate phosphoribosyltransferase from Streptococcus thermophilus (strain CNRZ 1066).